A 538-amino-acid chain; its full sequence is Cytochrome P450 52-M1 (538 aa).

The helical transmembrane segment at 18 to 38 (GLLPLLFVAFLVLHEPIWLLW) threads the bilayer. Residue Cys484 coordinates heme.

This sequence belongs to the cytochrome P450 family. It depends on heme as a cofactor.

The protein localises to the membrane. The catalysed reaction is an omega-methyl-long-chain fatty acid + reduced [NADPH--hemoprotein reductase] + O2 = an omega-hydroxy-long-chain fatty acid + oxidized [NADPH--hemoprotein reductase] + H2O + H(+). It catalyses the reaction an (omega-1)-ethyl fatty acid + reduced [NADPH--hemoprotein reductase] + O2 = an (omega-1)-hydroxy-long-chain fatty acid + oxidized [NADPH--hemoprotein reductase] + H2O + H(+). It carries out the reaction (9Z)-octadecenoate + reduced [NADPH--hemoprotein reductase] + O2 = 18-hydroxy-(9Z)-octadecenoate + oxidized [NADPH--hemoprotein reductase] + H2O + H(+). The enzyme catalyses (9Z)-octadecenoate + reduced [NADPH--hemoprotein reductase] + O2 = 17-hydroxy-(9Z)-octadecenoate + oxidized [NADPH--hemoprotein reductase] + H2O + H(+). The catalysed reaction is (9Z,12Z)-octadecadienoate + reduced [NADPH--hemoprotein reductase] + O2 = 18-hydroxy-(9Z,12Z)-octadecadienoate + oxidized [NADPH--hemoprotein reductase] + H2O + H(+). It catalyses the reaction (9Z,12Z)-octadecadienoate + reduced [NADPH--hemoprotein reductase] + O2 = 17-hydroxy-(9Z,12Z)-octadecadienoate + oxidized [NADPH--hemoprotein reductase] + H2O + H(+). It carries out the reaction hexadecanoate + reduced [NADPH--hemoprotein reductase] + O2 = 16-hydroxyhexadecanoate + oxidized [NADPH--hemoprotein reductase] + H2O + H(+). The enzyme catalyses (9Z)-hexadecenoate + reduced [NADPH--hemoprotein reductase] + O2 = (9Z)-16-hydroxyhexadec-9-enoate + oxidized [NADPH--hemoprotein reductase] + H2O + H(+). The catalysed reaction is octadecanoate + reduced [NADPH--hemoprotein reductase] + O2 = 18-hydroxyoctadecanoate + oxidized [NADPH--hemoprotein reductase] + H2O + H(+). Catalyzes the first step of sophorolipid biosynthesis. Catalyzes the terminal (at the omega-position) or subterminal (at the omega(-1)-position) hydroxylation of a fatty acid. This converts the fatty acid to a substrate for the subsequent glycosyltransferase reactions. Oleic acid is the preferred substrate, but it acts on various other C-16, C-18 and C-20 saturated and unsaturated fatty acids, namely palmitic, palmitoleic, stearic, linoleic, cis-9,10-epoxystearic, trans-9,10-epoxystearic and arachidonic acid. This is Cytochrome P450 52-M1 from Starmerella bombicola (Yeast).